We begin with the raw amino-acid sequence, 205 residues long: Adenylyl-sulfate kinase (205 aa).

31 to 38 (GLSGAGKS) serves as a coordination point for ATP. Residue Ser105 is the Phosphoserine intermediate of the active site.

It belongs to the APS kinase family.

It carries out the reaction adenosine 5'-phosphosulfate + ATP = 3'-phosphoadenylyl sulfate + ADP + H(+). It participates in sulfur metabolism; hydrogen sulfide biosynthesis; sulfite from sulfate: step 2/3. Its function is as follows. Catalyzes the synthesis of activated sulfate. The polypeptide is Adenylyl-sulfate kinase (Shewanella putrefaciens (strain CN-32 / ATCC BAA-453)).